The sequence spans 59 residues: Small ribosomal subunit protein eS17 (59 aa).

It belongs to the eukaryotic ribosomal protein eS17 family.

The polypeptide is Small ribosomal subunit protein eS17 (Halobacterium salinarum (strain ATCC 29341 / DSM 671 / R1)).